Consider the following 247-residue polypeptide: MIDETRTTVDQSELDHFSRIATEWWNPQGKFRPLHQFNPTRLAYIREKICLEFNRDPVSLMPFDNLKILDIGCGGGLLCEPMARLGATVVGVDAAQTNIDVAKIHAAQNNLSIDYRTTTAEALANEGEKFDIILNMEVVEHVADVNLFINATAKMLKPQGLMFVATLNRTWKAWGFAIIGAEYILRWLPKGTHDYKKFLKPRELKNFLSKNALTVIDEIGITYNPLNDSWNRSKDMDVNYLLLAKRS.

Residues Arg41, Gly72, Asp93, and Met136 each coordinate S-adenosyl-L-methionine.

It belongs to the methyltransferase superfamily. UbiG/COQ3 family.

The catalysed reaction is a 3-demethylubiquinol + S-adenosyl-L-methionine = a ubiquinol + S-adenosyl-L-homocysteine + H(+). It catalyses the reaction a 3-(all-trans-polyprenyl)benzene-1,2-diol + S-adenosyl-L-methionine = a 2-methoxy-6-(all-trans-polyprenyl)phenol + S-adenosyl-L-homocysteine + H(+). It participates in cofactor biosynthesis; ubiquinone biosynthesis. Its function is as follows. O-methyltransferase that catalyzes the 2 O-methylation steps in the ubiquinone biosynthetic pathway. The polypeptide is Ubiquinone biosynthesis O-methyltransferase (Bartonella tribocorum (strain CIP 105476 / IBS 506)).